The sequence spans 136 residues: Cytidine deaminase (136 aa).

In terms of domain architecture, CMP/dCMP-type deaminase spans 1 to 128 (MDVEKLIAES…KLLPGAFSKE (128 aa)). Substrate is bound at residue 42 to 44 (NIE). Cysteine 53 serves as a coordination point for Zn(2+). Residue glutamate 55 is the Proton donor of the active site. Zn(2+) contacts are provided by cysteine 86 and cysteine 89.

It belongs to the cytidine and deoxycytidylate deaminase family. The cofactor is Zn(2+).

The catalysed reaction is cytidine + H2O + H(+) = uridine + NH4(+). It carries out the reaction 2'-deoxycytidine + H2O + H(+) = 2'-deoxyuridine + NH4(+). Its function is as follows. This enzyme scavenges exogenous and endogenous cytidine and 2'-deoxycytidine for UMP synthesis. The polypeptide is Cytidine deaminase (cdd) (Sporosarcina psychrophila (Bacillus psychrophilus)).